A 299-amino-acid polypeptide reads, in one-letter code: Glycine--tRNA ligase alpha subunit (299 aa).

It belongs to the class-II aminoacyl-tRNA synthetase family. In terms of assembly, tetramer of two alpha and two beta subunits.

The protein localises to the cytoplasm. The catalysed reaction is tRNA(Gly) + glycine + ATP = glycyl-tRNA(Gly) + AMP + diphosphate. In Desulforapulum autotrophicum (strain ATCC 43914 / DSM 3382 / VKM B-1955 / HRM2) (Desulfobacterium autotrophicum), this protein is Glycine--tRNA ligase alpha subunit.